A 132-amino-acid chain; its full sequence is Small ribosomal subunit protein uS13 (132 aa).

Residues 106–132 (PVRGQVTQKNARTRKGPRKTVAGKKGK) form a disordered region. Positions 116 to 132 (ARTRKGPRKTVAGKKGK) are enriched in basic residues.

Belongs to the universal ribosomal protein uS13 family. As to quaternary structure, part of the 30S ribosomal subunit. Forms a loose heterodimer with protein S19. Forms two bridges to the 50S subunit in the 70S ribosome.

Located at the top of the head of the 30S subunit, it contacts several helices of the 16S rRNA. In the 70S ribosome it contacts the 23S rRNA (bridge B1a) and protein L5 of the 50S subunit (bridge B1b), connecting the 2 subunits; these bridges are implicated in subunit movement. Contacts the tRNAs in the A and P-sites. In Mycoplasmopsis pulmonis (strain UAB CTIP) (Mycoplasma pulmonis), this protein is Small ribosomal subunit protein uS13.